A 185-amino-acid polypeptide reads, in one-letter code: Elongation factor P (185 aa).

The protein belongs to the elongation factor P family.

Its subcellular location is the cytoplasm. The protein operates within protein biosynthesis; polypeptide chain elongation. Involved in peptide bond synthesis. Stimulates efficient translation and peptide-bond synthesis on native or reconstituted 70S ribosomes in vitro. Probably functions indirectly by altering the affinity of the ribosome for aminoacyl-tRNA, thus increasing their reactivity as acceptors for peptidyl transferase. In Desulfitobacterium hafniense (strain Y51), this protein is Elongation factor P.